The primary structure comprises 198 residues: Shikimate kinase (198 aa).

26 to 31 (GSGKSQ) contacts ATP. Ser-30 lines the Mg(2+) pocket. Residues Asp-48, Arg-72, and Gly-94 each contribute to the substrate site. Arg-132 contributes to the ATP binding site. Arg-151 contacts substrate. Gln-167 is a binding site for ATP.

Belongs to the shikimate kinase family. Monomer. Requires Mg(2+) as cofactor.

It is found in the cytoplasm. It catalyses the reaction shikimate + ATP = 3-phosphoshikimate + ADP + H(+). It functions in the pathway metabolic intermediate biosynthesis; chorismate biosynthesis; chorismate from D-erythrose 4-phosphate and phosphoenolpyruvate: step 5/7. Catalyzes the specific phosphorylation of the 3-hydroxyl group of shikimic acid using ATP as a cosubstrate. The sequence is that of Shikimate kinase from Prochlorococcus marinus (strain NATL2A).